The chain runs to 585 residues: YTH domain-containing family protein 3 (585 aa).

Disordered stretches follow at residues 1–51 (MSAT…SYPP), 244–277 (KPAK…MNIG), and 304–350 (PQPL…QPQL). Ser2 carries the post-translational modification N-acetylserine. Over residues 15 to 24 (NKVSVQNGSI) the composition is skewed to polar residues. Ser23 carries the phosphoserine modification. A compositionally biased stretch (basic residues) spans 244–254 (KPAKPQPKLKP). Over residues 329–350 (QQQQGPQPQAQPHQVQSQQPQL) the composition is skewed to low complexity. In terms of domain architecture, YTH spans 416 to 550 (GRVFIIKSYS…EKAKQVLKII (135 aa)). Residues 422 to 424 (KSY), Asp428, 438 to 439 (WC), Asn468, Trp492, and Trp497 each bind RNA.

It belongs to the YTHDF family. YTHDF3 subfamily. In terms of assembly, interacts with CNOT1; promoting recruitment of the CCR4-NOT complex. Interacts with YTHDF1. Interacts with YTHDF2. Interacts with PAN3.

The protein resides in the cytoplasm. Its subcellular location is the cytosol. It is found in the P-body. The protein localises to the stress granule. Its function is as follows. Specifically recognizes and binds N6-methyladenosine (m6A)-containing RNAs, and regulates their stability. M6A is a modification present at internal sites of mRNAs and some non-coding RNAs and plays a role in mRNA stability and processing. Acts as a regulator of mRNA stability by promoting degradation of m6A-containing mRNAs via interaction with the CCR4-NOT complex or PAN3. The YTHDF paralogs (YTHDF1, YTHDF2 and YTHDF3) share m6A-containing mRNAs targets and act redundantly to mediate mRNA degradation and cellular differentiation. Acts as a negative regulator of type I interferon response by down-regulating interferon-stimulated genes (ISGs) expression: acts by binding to FOXO3 mRNAs. Binds to FOXO3 mRNAs independently of METTL3-mediated m6A modification. Can also act as a regulator of mRNA stability in cooperation with YTHDF2 by binding to m6A-containing mRNA and promoting their degradation. Recognizes and binds m6A-containing circular RNAs (circRNAs); circRNAs are generated through back-splicing of pre-mRNAs, a non-canonical splicing process promoted by dsRNA structures across circularizing exons. Promotes formation of phase-separated membraneless compartments, such as P-bodies or stress granules, by undergoing liquid-liquid phase separation upon binding to mRNAs containing multiple m6A-modified residues: polymethylated mRNAs act as a multivalent scaffold for the binding of YTHDF proteins, juxtaposing their disordered regions and thereby leading to phase separation. The resulting mRNA-YTHDF complexes then partition into different endogenous phase-separated membraneless compartments, such as P-bodies, stress granules or neuronal RNA granules. May also recognize and bind N1-methyladenosine (m1A)-containing mRNAs: inhibits trophoblast invasion by binding to m1A-methylated transcripts of IGF1R, promoting their degradation. The polypeptide is YTH domain-containing family protein 3 (Mus musculus (Mouse)).